Consider the following 72-residue polypeptide: Probable neurotoxin pcD-996 (72 aa).

The N-terminal stretch at 1-19 (MNYLVMISFALLLVIGVES) is a signal peptide. One can recognise an LCN-type CS-alpha/beta domain in the interval 21-72 (RDGYFVEPDNCLVYCMPSPEICDRGCKRYGATSGFCKEFSKGENFCWCKGLR). Intrachain disulfides connect C35/C56, C42/C66, and C46/C68. R72 is a propeptide (removed by a carboxypeptidase).

This sequence belongs to the long (3 C-C) scorpion toxin superfamily. Expressed by the venom gland.

It localises to the secreted. The protein is Probable neurotoxin pcD-996 of Androctonus australis (Sahara scorpion).